The chain runs to 215 residues: UPF0441 protein SG0265 (215 aa).

This sequence belongs to the UPF0441 family.

This Sodalis glossinidius (strain morsitans) protein is UPF0441 protein SG0265.